The chain runs to 79 residues: Conotoxin 12 (79 aa).

The first 22 residues, 1-22 (MKLTCVLIITVLFLTASQLITA), serve as a signal peptide directing secretion. Positions 23-47 (DYSRDQRQYRAVRLGDEMRNFKGAR) are excised as a propeptide. 3 disulfides stabilise this stretch: Cys-49-Cys-62, Cys-56-Cys-67, and Cys-61-Cys-77.

This sequence belongs to the conotoxin O1 superfamily. As to expression, expressed by the venom duct.

The protein resides in the secreted. This chain is Conotoxin 12, found in Conus vexillum (Flag cone).